Here is a 446-residue protein sequence, read N- to C-terminus: Glutamine synthetase (446 aa).

A GS beta-grasp domain is found at 15–102; sequence RDIRFVRLWF…MFCDITMPDG (88 aa). A GS catalytic domain is found at 109 to 446; the sequence is SRHVLRRQLA…PYELKNYLSL (338 aa). Residues glutamate 132 and glutamate 134 each contribute to the Mg(2+) site. Position 184 (glutamate 184) interacts with ATP. Glutamate 189 and glutamate 196 together coordinate Mg(2+). Position 241 (glycine 241) interacts with L-glutamate. Residue histidine 245 coordinates Mg(2+). ATP is bound by residues 247–249 and serine 249; that span reads HMS. 3 residues coordinate L-glutamate: arginine 298, glutamate 304, and arginine 316. Residues arginine 316 and arginine 321 each contribute to the ATP site. A Mg(2+)-binding site is contributed by glutamate 336. Residue arginine 338 participates in L-glutamate binding. Lysine 363 is covalently cross-linked (Isoglutamyl lysine isopeptide (Lys-Gln) (interchain with Q-Cter in protein Pup)).

This sequence belongs to the glutamine synthetase family. Oligomer of 12 subunits arranged in the form of two hexagons. In its feedback-inhibited form, interacts with TnrA in order to block its DNA-binding activity. The cofactor is Mg(2+).

Its subcellular location is the cytoplasm. It catalyses the reaction L-glutamate + NH4(+) + ATP = L-glutamine + ADP + phosphate + H(+). Inhibited by glutamine. Functionally, glutamine synthetase (GS) is an unusual multitasking protein that functions as an enzyme, a transcription coregulator, and a chaperone in ammonium assimilation and in the regulation of genes involved in nitrogen metabolism. It catalyzes the ATP-dependent biosynthesis of glutamine from glutamate and ammonia. Feedback-inhibited GlnA also interacts with and regulates the activity of the transcriptional regulator TnrA. During nitrogen limitation, TnrA is in its DNA-binding active state and turns on the transcription of genes required for nitrogen assimilation. Under conditions of nitrogen excess, feedback-inhibited GlnA forms a stable complex with TnrA, which inhibits its DNA-binding activity. In contrast, feedback-inhibited GlnA acts as a chaperone to stabilize the DNA-binding activity of GlnR, which represses the transcription of nitrogen assimilation genes. This chain is Glutamine synthetase, found in Mycolicibacterium smegmatis (strain ATCC 700084 / mc(2)155) (Mycobacterium smegmatis).